Consider the following 456-residue polypeptide: tRNA-2-methylthio-N(6)-dimethylallyladenosine synthase (456 aa).

An MTTase N-terminal domain is found at Glu18–Val136. Residues Cys27, Cys63, Cys97, Cys173, Cys177, and Cys180 each coordinate [4Fe-4S] cluster. Residues Arg159–Asn391 form the Radical SAM core domain. In terms of domain architecture, TRAM spans Lys392 to Glu455.

This sequence belongs to the methylthiotransferase family. MiaB subfamily. In terms of assembly, monomer. [4Fe-4S] cluster is required as a cofactor.

Its subcellular location is the cytoplasm. The enzyme catalyses N(6)-dimethylallyladenosine(37) in tRNA + (sulfur carrier)-SH + AH2 + 2 S-adenosyl-L-methionine = 2-methylsulfanyl-N(6)-dimethylallyladenosine(37) in tRNA + (sulfur carrier)-H + 5'-deoxyadenosine + L-methionine + A + S-adenosyl-L-homocysteine + 2 H(+). Functionally, catalyzes the methylthiolation of N6-(dimethylallyl)adenosine (i(6)A), leading to the formation of 2-methylthio-N6-(dimethylallyl)adenosine (ms(2)i(6)A) at position 37 in tRNAs that read codons beginning with uridine. In Clostridium botulinum (strain Alaska E43 / Type E3), this protein is tRNA-2-methylthio-N(6)-dimethylallyladenosine synthase.